Here is a 320-residue protein sequence, read N- to C-terminus: Homoserine kinase (320 aa).

Residue 100–110 (PLSSGMGSSAA) participates in ATP binding.

Belongs to the GHMP kinase family. Homoserine kinase subfamily.

The protein resides in the cytoplasm. The catalysed reaction is L-homoserine + ATP = O-phospho-L-homoserine + ADP + H(+). The protein operates within amino-acid biosynthesis; L-threonine biosynthesis; L-threonine from L-aspartate: step 4/5. Catalyzes the ATP-dependent phosphorylation of L-homoserine to L-homoserine phosphate. This is Homoserine kinase from Chlorobium phaeovibrioides (strain DSM 265 / 1930) (Prosthecochloris vibrioformis (strain DSM 265)).